Reading from the N-terminus, the 219-residue chain is GTP cyclohydrolase 1 (219 aa).

The segment at 1–37 (MDAVLKSLSVRLPDAADKRSDTGRPERVTERPTRQEA) is disordered. Over residues 14 to 37 (DAADKRSDTGRPERVTERPTRQEA) the composition is skewed to basic and acidic residues. Residues cysteine 108, histidine 111, and cysteine 179 each contribute to the Zn(2+) site.

This sequence belongs to the GTP cyclohydrolase I family. As to quaternary structure, homomer.

The enzyme catalyses GTP + H2O = 7,8-dihydroneopterin 3'-triphosphate + formate + H(+). It participates in cofactor biosynthesis; 7,8-dihydroneopterin triphosphate biosynthesis; 7,8-dihydroneopterin triphosphate from GTP: step 1/1. This chain is GTP cyclohydrolase 1, found in Methylobacterium sp. (strain 4-46).